The primary structure comprises 379 residues: Alcohol dehydrogenase class-3 (379 aa).

Positions 47, 69, 99, 102, 105, 113, and 176 each coordinate Zn(2+).

The protein belongs to the zinc-containing alcohol dehydrogenase family. Class-III subfamily. Homodimer. Zn(2+) serves as cofactor.

It is found in the cytoplasm. It carries out the reaction a primary alcohol + NAD(+) = an aldehyde + NADH + H(+). It catalyses the reaction a secondary alcohol + NAD(+) = a ketone + NADH + H(+). The enzyme catalyses S-(hydroxymethyl)glutathione + NADP(+) = S-formylglutathione + NADPH + H(+). The catalysed reaction is S-(hydroxymethyl)glutathione + NAD(+) = S-formylglutathione + NADH + H(+). Class-III ADH is remarkably ineffective in oxidizing ethanol, but it readily catalyzes the oxidation of long-chain primary alcohols and the oxidation of S-(hydroxymethyl) glutathione. The polypeptide is Alcohol dehydrogenase class-3 (adh5) (Dictyostelium discoideum (Social amoeba)).